We begin with the raw amino-acid sequence, 133 residues long: ATP synthase epsilon chain (133 aa).

This sequence belongs to the ATPase epsilon chain family. In terms of assembly, F-type ATPases have 2 components, CF(1) - the catalytic core - and CF(0) - the membrane proton channel. CF(1) has five subunits: alpha(3), beta(3), gamma(1), delta(1), epsilon(1). CF(0) has three main subunits: a, b and c.

It is found in the cell membrane. Its function is as follows. Produces ATP from ADP in the presence of a proton gradient across the membrane. The polypeptide is ATP synthase epsilon chain (Bacillus cereus (strain ATCC 14579 / DSM 31 / CCUG 7414 / JCM 2152 / NBRC 15305 / NCIMB 9373 / NCTC 2599 / NRRL B-3711)).